The sequence spans 210 residues: MNFVAFERAKQGTGASRRLRNSGKTPGIVYGGSAEPQLIEVDHNALWHALKKEAFHSSVLDMELAGKTSKVLLRDVQYHPYKQLVLHIDFQRVDEKTKLHMKVPLHFTGAEESPAVKIDKCMVNPVATELDVSCMPSDLPEFINVDLSKLEKGRSLHLKDIKLPRGVSPVVRGGQQNPVLVSVVPPVAEVEAPAEGAAAPAPAPAKKGKK.

Low complexity predominate over residues 191–200 (EAPAEGAAAP). The interval 191 to 210 (EAPAEGAAAPAPAPAKKGKK) is disordered.

It belongs to the bacterial ribosomal protein bL25 family. CTC subfamily. As to quaternary structure, part of the 50S ribosomal subunit; part of the 5S rRNA/L5/L18/L25 subcomplex. Contacts the 5S rRNA. Binds to the 5S rRNA independently of L5 and L18.

Its function is as follows. This is one of the proteins that binds to the 5S RNA in the ribosome where it forms part of the central protuberance. This Paracidovorax citrulli (strain AAC00-1) (Acidovorax citrulli) protein is Large ribosomal subunit protein bL25.